Here is a 174-residue protein sequence, read N- to C-terminus: Large ribosomal subunit protein uL10 (174 aa).

This sequence belongs to the universal ribosomal protein uL10 family. In terms of assembly, part of the ribosomal stalk of the 50S ribosomal subunit. The N-terminus interacts with L11 and the large rRNA to form the base of the stalk. The C-terminus forms an elongated spine to which L12 dimers bind in a sequential fashion forming a multimeric L10(L12)X complex.

Forms part of the ribosomal stalk, playing a central role in the interaction of the ribosome with GTP-bound translation factors. This is Large ribosomal subunit protein uL10 from Anaeromyxobacter dehalogenans (strain 2CP-C).